We begin with the raw amino-acid sequence, 83 residues long: uncharacterized protein (83 aa).

The protein localises to the plastid. It is found in the chloroplast. This is an uncharacterized protein from Pinus thunbergii (Japanese black pine).